The sequence spans 470 residues: 3-isopropylmalate dehydratase large subunit (470 aa).

[4Fe-4S] cluster contacts are provided by cysteine 349, cysteine 409, and cysteine 412.

The protein belongs to the aconitase/IPM isomerase family. LeuC type 1 subfamily. In terms of assembly, heterodimer of LeuC and LeuD. [4Fe-4S] cluster is required as a cofactor.

The enzyme catalyses (2R,3S)-3-isopropylmalate = (2S)-2-isopropylmalate. It functions in the pathway amino-acid biosynthesis; L-leucine biosynthesis; L-leucine from 3-methyl-2-oxobutanoate: step 2/4. Catalyzes the isomerization between 2-isopropylmalate and 3-isopropylmalate, via the formation of 2-isopropylmaleate. The polypeptide is 3-isopropylmalate dehydratase large subunit (Afipia carboxidovorans (strain ATCC 49405 / DSM 1227 / KCTC 32145 / OM5) (Oligotropha carboxidovorans)).